We begin with the raw amino-acid sequence, 901 residues long: Protein translocase subunit SecA (901 aa).

ATP is bound by residues Gln-85, 103–107, and Asp-510; that span reads GEGKT. Residues 848–901 form a disordered region; that stretch reads RINQNNLPVDENSQTTQNSETEDYSDRRIGRNEPCPCGSGKKYKHCHGSRVARQ. A compositionally biased stretch (polar residues) spans 849–866; it reads INQNNLPVDENSQTTQNS. 4 residues coordinate Zn(2+): Cys-882, Cys-884, Cys-893, and His-894. Basic residues predominate over residues 888-901; the sequence is KKYKHCHGSRVARQ.

Belongs to the SecA family. In terms of assembly, monomer and homodimer. Part of the essential Sec protein translocation apparatus which comprises SecA, SecYEG and auxiliary proteins SecDF-YajC and YidC. Forms a complex with SecB. The cofactor is Zn(2+).

It localises to the cell inner membrane. Its subcellular location is the cytoplasm. It carries out the reaction ATP + H2O + cellular proteinSide 1 = ADP + phosphate + cellular proteinSide 2.. Functionally, part of the Sec protein translocase complex. Interacts with the SecYEG preprotein conducting channel. Has a central role in coupling the hydrolysis of ATP to the transfer of proteins into and across the cell membrane, serving both as a receptor for the preprotein-SecB complex and as an ATP-driven molecular motor driving the stepwise translocation of polypeptide chains across the membrane. In Haemophilus influenzae (strain ATCC 51907 / DSM 11121 / KW20 / Rd), this protein is Protein translocase subunit SecA.